The primary structure comprises 444 residues: RING finger and transmembrane domain-containing protein 2 (444 aa).

Topologically, residues 1–181 are extracellular; the sequence is MWLFTVNQVL…ILLAKLCFQH (181 aa). Disordered stretches follow at residues 13 to 41 and 92 to 149; these read MQRRHSSNTDNIPPERNRSQALSSEASVD and PASR…PGTP. The segment covering 107 to 121 has biased composition (basic residues); the sequence is YHHRQPHHHFHHGGH. Basic and acidic residues predominate over residues 131–140; that stretch reads GGDHRGHSEE. A helical transmembrane segment spans residues 182-202; it reads KLGIAVCIGMASTFAYANSTL. Residues 203–214 are Cytoplasmic-facing; the sequence is REQVSLKEKRSV. A helical transmembrane segment spans residues 215 to 235; the sequence is LVILWILAFLAGNTLYVLYTF. At 236-255 the chain is on the extracellular side; sequence SSQQLYNSLIFLKPNLETLD. A helical transmembrane segment spans residues 256 to 276; sequence FFDLLWIVGIADFVLKYITIA. Residues 277–329 lie on the Cytoplasmic side of the membrane; it reads LKCLIVALPKIILAVKSKGKFYLVIEELSQLFRSLVPIQLWYKYIMGDDSSNS. A helical membrane pass occupies residues 330–350; it reads YFLGGVLIVLYSLCKSFDICG. Residues 351-444 are Extracellular-facing; sequence RVGGVRKALK…GATSAHFQVY (94 aa). The RING-type; degenerate zinc finger occupies 384–422; the sequence is CAICQAEFREPLILLCQHVFCEECLCLWLDRERTCPLSR.

It is found in the membrane. E3 ubiquitin-protein ligase that negatively regulates IL3-dependent cellular responses through IL3RA ubiquitination and degradation by the proteasome, having an anti-inflammatory effect. The sequence is that of RING finger and transmembrane domain-containing protein 2 (RNFT2) from Pongo abelii (Sumatran orangutan).